The sequence spans 977 residues: uncharacterized protein (977 aa).

The span at 1-24 shows a compositional bias: polar residues; that stretch reads MMQQRSGSLSLLSNAVQAGQSSDP. The disordered stretch occupies residues 1 to 65; the sequence is MMQQRSGSLS…HEKTKAGKDR (65 aa). Positions 72 to 99 form a DNA-binding region, zn(2)-C6 fungal-type; the sequence is CQSCRKKKVKCSGERPSCDQCLKHNIPC. Residues 176–195 are disordered; it reads LSHPTIVPSSNSSSLLNSTN. The segment covering 177–195 has biased composition (low complexity); the sequence is SHPTIVPSSNSSSLLNSTN. Ser-220 is subject to Phosphoserine. Disordered stretches follow at residues 287–307, 357–380, and 751–774; these read TDSL…DSNR, NSAS…NNSL, and HTPI…ANGA. A compositionally biased stretch (low complexity) spans 364–379; the sequence is STSYTNNNDTTSDNNS. Over residues 751–770 the composition is skewed to polar residues; sequence HTPINVTNGESQNNSNNDPS.

It localises to the cytoplasm. The protein resides in the nucleus. This is an uncharacterized protein from Schizosaccharomyces pombe (strain 972 / ATCC 24843) (Fission yeast).